Reading from the N-terminus, the 431-residue chain is Adenylosuccinate synthetase (431 aa).

Residues 13–19 and 41–43 each bind GTP; these read GDEGKGK and GHT. D14 serves as the catalytic Proton acceptor. 2 residues coordinate Mg(2+): D14 and G41. IMP is bound by residues 14–17, 39–42, T130, R144, Q225, T240, and R304; these read DEGK and NAGH. H42 functions as the Proton donor in the catalytic mechanism. 300 to 306 is a binding site for substrate; sequence SVTGRPR. GTP-binding positions include R306, 332 to 334, and 414 to 416; these read KLD and STG.

The protein belongs to the adenylosuccinate synthetase family. Homodimer. Mg(2+) is required as a cofactor.

The protein resides in the cytoplasm. It catalyses the reaction IMP + L-aspartate + GTP = N(6)-(1,2-dicarboxyethyl)-AMP + GDP + phosphate + 2 H(+). The protein operates within purine metabolism; AMP biosynthesis via de novo pathway; AMP from IMP: step 1/2. In terms of biological role, plays an important role in the de novo pathway of purine nucleotide biosynthesis. Catalyzes the first committed step in the biosynthesis of AMP from IMP. This chain is Adenylosuccinate synthetase, found in Bordetella petrii (strain ATCC BAA-461 / DSM 12804 / CCUG 43448).